The following is a 279-amino-acid chain: Protoheme IX farnesyltransferase (279 aa).

The next 9 helical transmembrane spans lie at 1–21 (MIKPGIILGNIICLSGGFFLA), 29–49 (IFFLKTVFGLILIISSSCILN), 79–99 (ILFFFSIILLILGLLVFYIYI), 101–121 (FLCTIISFFGFFFYVYLYSYL), 128–148 (FSTFVGSVSGSLPPIIGYVAV), 156–176 (CTILFFMFSFWQIAHSYSIII), 200–220 (IIFISICILNLFFFNFLLYFF), 225–245 (FFYFLYTSFFIFLWFIFSFLS), and 254–274 (IWSRIMFFFSIFIIFMISFLM).

Belongs to the UbiA prenyltransferase family. Protoheme IX farnesyltransferase subfamily.

It localises to the cell membrane. The catalysed reaction is heme b + (2E,6E)-farnesyl diphosphate + H2O = Fe(II)-heme o + diphosphate. The protein operates within porphyrin-containing compound metabolism; heme O biosynthesis; heme O from protoheme: step 1/1. Its function is as follows. Converts heme B (protoheme IX) to heme O by substitution of the vinyl group on carbon 2 of heme B porphyrin ring with a hydroxyethyl farnesyl side group. In Buchnera aphidicola subsp. Cinara cedri (strain Cc), this protein is Protoheme IX farnesyltransferase.